A 2883-amino-acid polypeptide reads, in one-letter code: Desmoplakin (2883 aa).

Positions methionine 1–glutamate 21 are disordered. Positions methionine 1–glutamate 596 are interaction with PKP1, JUP, PKP2. The interval methionine 1–lysine 1068 is globular 1. Serine 22 is subject to Phosphoserine. Threonine 59 carries the post-translational modification Phosphothreonine. Serine 65 bears the Phosphoserine mark. Position 68 is a phosphotyrosine (tyrosine 68). Position 73 is a phosphothreonine (threonine 73). A phosphoserine mark is found at serine 177, serine 178, and serine 188. Spectrin repeat units follow at residues serine 190–glutamine 283 and leucine 284–asparagine 387. The stretch at alanine 388–valine 458 is one Spectrin 3a repeat. One can recognise an SH3 domain in the interval asparagine 470 to proline 527. The stretch at asparagine 528 to lysine 557 is one Spectrin 3b repeat. Spectrin repeat units follow at residues serine 558–proline 639, valine 666–serine 781, and valine 782–lysine 895. A coiled-coil region spans residues lysine 1034 to glutamine 1956. Residues phenylalanine 1069–arginine 1957 are central fibrous rod domain. Phosphoserine occurs at positions 1670, 1720, and 2036. Positions proline 1958–glycine 2882 are globular 2. The 4.5 X 38 AA tandem repeats (Domain A) stretch occupies residues threonine 1972–methionine 2220. Plectin repeat units lie at residues glutamine 2021–threonine 2057, valine 2058–arginine 2095, glutamine 2096–glycine 2133, methionine 2134–tyrosine 2171, asparagine 2175–glycine 2209, leucine 2210–valine 2245, lysine 2263–alanine 2300, leucine 2301–lysine 2338, glutamate 2339–glycine 2376, isoleucine 2377–serine 2414, serine 2418–glycine 2452, serine 2468–phenylalanine 2505, threonine 2519–phenylalanine 2556, serine 2622–glycine 2659, glutamine 2660–alanine 2697, glutamine 2736–alanine 2773, and glutamine 2774–glycine 2811. A phosphoserine mark is found at serine 2219, serine 2221, and serine 2237. A 4.5 X 38 AA tandem repeats (Domain B) region spans residues aspartate 2256–leucine 2458. The Omega-hydroxyceramide glutamate ester moiety is linked to residue glutamine 2492. The interval leucine 2621–alanine 2833 is 4.5 X 38 AA tandem repeats (Domain C). Phosphoserine occurs at positions 2822 and 2827. The interval serine 2822–tyrosine 2883 is disordered. A Phosphotyrosine modification is found at tyrosine 2829. Serine 2832 and serine 2836 each carry phosphoserine. Residues glycine 2835 to arginine 2858 are 6 X 4 AA tandem repeats of G-S-R-[SR]. Positions glycine 2835–arginine 2858 are enriched in low complexity. 2 positions are modified to omega-N-methylarginine: arginine 2837 and arginine 2858. Serine 2860 carries the post-translational modification Phosphoserine. At threonine 2864 the chain carries Phosphothreonine. Residues serine 2867 to tyrosine 2883 are compositionally biased toward low complexity. Serine 2879 carries the phosphoserine modification.

It belongs to the plakin or cytolinker family. As to quaternary structure, homodimer. Interacts with COL17A1 (via cytoplasmic region). Interacts with DSC2. Interacts with PKP1. Interacts with PKP2. Interacts weakly with TMEM65. Phosphorylation at Ser-2860 increases association with intermediate filament cytokeratin, potentially facilitating interaction between desmosome junctions and intermediate filament architecture. In terms of tissue distribution, expressed in undifferentiated keratinocytes of the epidermis at birth, expression increases as differentiation proceeds (at protein level). Abundantly expressed in the suprabasal layers and weakly in the basal layers of the outer hair root sheath (at protein level). Expressed at intercalated disks in cardiomyocytes (at protein level).

It localises to the cell junction. Its subcellular location is the desmosome. The protein resides in the cell membrane. It is found in the cytoplasm. Major high molecular weight protein of desmosomes. Regulates profibrotic gene expression in cardiomyocytes via activation of the MAPK14/p38 MAPK signaling cascade and increase in TGFB1 protein abundance. This chain is Desmoplakin, found in Mus musculus (Mouse).